Consider the following 347-residue polypeptide: Secretory carrier-associated membrane protein 3 (347 aa).

A disordered region spans residues 1–88; that stretch reads MAQSRDGGNP…EPKNYGSYST (88 aa). The Cytoplasmic portion of the chain corresponds to 1-170; the sequence is MAQSRDGGNP…QKTVSTMYYL (170 aa). Serine 32 carries the phosphoserine modification. Residue threonine 37 is modified to Phosphothreonine. 2 positions are modified to phosphotyrosine: tyrosine 41 and tyrosine 53. Residues 49-66 are compositionally biased toward pro residues; the sequence is PPPAYEPPAPAPLPPPSA. A phosphoserine mark is found at serine 72 and serine 76. Tyrosine 83 carries the post-translational modification Phosphotyrosine. A Phosphoserine modification is found at serine 85. Helical transmembrane passes span 171–191, 197–217, 247–267, and 277–297; these read WMCS…SFCV, AGFG…FVCW, FVLQ…SALV, and VLML…IVML. The Cytoplasmic portion of the chain corresponds to 298–347; the sequence is KRIHSLYRRTGASFQKAQQEFAAGVFSNPAVRTAAANAAAGAAENAFRAP. Lysine 313 is covalently cross-linked (Glycyl lysine isopeptide (Lys-Gly) (interchain with G-Cter in SUMO1)).

The protein belongs to the SCAMP family. Interacts with NEDD4, NEDD4L and TSG101. Interacts with RNF126. Monoubiquitinated. In terms of tissue distribution, widely expressed, with highest expression in heart and skeletal muscle.

It localises to the membrane. In terms of biological role, functions in post-Golgi recycling pathways. Acts as a recycling carrier to the cell surface. This Homo sapiens (Human) protein is Secretory carrier-associated membrane protein 3 (SCAMP3).